A 372-amino-acid chain; its full sequence is uncharacterized protein (372 aa).

The N-terminal stretch at 1–24 (MSYYQIIVCILASISYIILLEVIA) is a signal peptide. The 124-residue stretch at 92–215 (PNRNDTDASY…SSYNLLWSDL (124 aa)) folds into the PA domain. The chain crosses the membrane as a helical span at residues 236–256 (FWPFLLCFSPSIIMLITVQAL). Serine 280 bears the Phosphoserine mark. The segment at 321–363 (CVICLESFTKGDKVVALPCKHEFHRPCIAKWIVDYRHACPTCN) adopts an RING-type; atypical zinc-finger fold.

The protein resides in the golgi apparatus membrane. It is found in the vacuole membrane. This is an uncharacterized protein from Schizosaccharomyces pombe (strain 972 / ATCC 24843) (Fission yeast).